A 477-amino-acid chain; its full sequence is Glycogen synthase (477 aa).

Lys-15 contacts ADP-alpha-D-glucose.

Belongs to the glycosyltransferase 1 family. Bacterial/plant glycogen synthase subfamily.

It carries out the reaction [(1-&gt;4)-alpha-D-glucosyl](n) + ADP-alpha-D-glucose = [(1-&gt;4)-alpha-D-glucosyl](n+1) + ADP + H(+). It functions in the pathway glycan biosynthesis; glycogen biosynthesis. Synthesizes alpha-1,4-glucan chains using ADP-glucose. The sequence is that of Glycogen synthase from Serratia proteamaculans (strain 568).